A 197-amino-acid polypeptide reads, in one-letter code: Protein-S-isoprenylcysteine O-methyltransferase A (197 aa).

Helical transmembrane passes span 16–36 (MLLSLIFFHISEYILAITIHG), 52–72 (ALAMLLSLLEYLTEIILFPGL), and 81–101 (FGLIMIIVGEIIRKAAIITAG). S-adenosyl-L-methionine contacts are provided by residues 116–119 (HGLV), Tyr-124, and 129–132 (HPSY). The helical transmembrane segment at 140–160 (VGTQVMLCNPVSAVAFAVVVW) threads the bilayer. Arg-166 lines the substrate pocket. Glu-170 contacts S-adenosyl-L-methionine.

The protein belongs to the class VI-like SAM-binding methyltransferase superfamily. Isoprenylcysteine carboxyl methyltransferase family. Zn(2+) serves as cofactor. In terms of tissue distribution, expressed primarily in flowers, stems, leaves and roots. Almost not expressed in siliques. Detected in root tips and vascular tissues of roots, cotyledons, petiols, hypocotyls, filaments, pollen grains and the distal and proximal portions of the gynoecium.

Its subcellular location is the endoplasmic reticulum membrane. It carries out the reaction [protein]-C-terminal S-[(2E,6E)-farnesyl]-L-cysteine + S-adenosyl-L-methionine = [protein]-C-terminal S-[(2E,6E)-farnesyl]-L-cysteine methyl ester + S-adenosyl-L-homocysteine. Its activity is regulated as follows. Inhibited by farnesylthioacetic acid (FTAA) and N-acetyl-S-trans, trans-farnesyl-l-cysteine (AFC). Catalyzes the post-translational methylation of isoprenylated C-terminal cysteine residues, resulting in the modulation of the function of prenylated proteins. Involved in negative regulation of abscisic acid signaling. Carboxyl methylation is a reversible and potentially regulated step in the post-translational modification of prenylated proteins. The chain is Protein-S-isoprenylcysteine O-methyltransferase A from Arabidopsis thaliana (Mouse-ear cress).